Reading from the N-terminus, the 268-residue chain is Ribosomal RNA small subunit methyltransferase A (268 aa).

Residues Asn-18, Leu-20, Gly-45, Glu-66, Asp-91, and Asn-112 each contribute to the S-adenosyl-L-methionine site.

Belongs to the class I-like SAM-binding methyltransferase superfamily. rRNA adenine N(6)-methyltransferase family. RsmA subfamily.

The protein resides in the cytoplasm. It carries out the reaction adenosine(1518)/adenosine(1519) in 16S rRNA + 4 S-adenosyl-L-methionine = N(6)-dimethyladenosine(1518)/N(6)-dimethyladenosine(1519) in 16S rRNA + 4 S-adenosyl-L-homocysteine + 4 H(+). Functionally, specifically dimethylates two adjacent adenosines (A1518 and A1519) in the loop of a conserved hairpin near the 3'-end of 16S rRNA in the 30S particle. May play a critical role in biogenesis of 30S subunits. The polypeptide is Ribosomal RNA small subunit methyltransferase A (Pseudoalteromonas translucida (strain TAC 125)).